The primary structure comprises 311 residues: Serine/threonine-protein phosphatase 4 catalytic subunit A (311 aa).

Positions 58, 60, 86, and 118 each coordinate Mn(2+). His119 (proton donor) is an active-site residue. Positions 168 and 242 each coordinate Mn(2+). Leu311 is modified (leucine methyl ester).

The protein belongs to the PPP phosphatase family. PP-4 (PP-X) subfamily. Serine/threonine-protein phosphatase 4 (PP4) occurs in different assemblies of the catalytic and one or more regulatory subunits. Requires Mn(2+) as cofactor.

It is found in the cytoplasm. The protein resides in the cytoskeleton. It localises to the microtubule organizing center. The protein localises to the centrosome. The enzyme catalyses O-phospho-L-seryl-[protein] + H2O = L-seryl-[protein] + phosphate. It carries out the reaction O-phospho-L-threonyl-[protein] + H2O = L-threonyl-[protein] + phosphate. In terms of biological role, protein phosphatase that regulates many processes such as microtubule organization at centrosomes. In Danio rerio (Zebrafish), this protein is Serine/threonine-protein phosphatase 4 catalytic subunit A (ppp4ca).